Consider the following 603-residue polypeptide: Shugoshin (603 aa).

Positions 11–74 form a coiled coil; that stretch reads HIQELQNILD…NVQLRSQVSL (64 aa). 2 disordered regions span residues 112-164 and 201-227; these read ESLP…RSST and NEID…SNRR. Low complexity-rich tracts occupy residues 146–157 and 201–214; these read SVSTGSAHSTSS and NEID…DNLL. The segment covering 218-227 has biased composition (basic residues); that stretch reads PHKKRKSNRR. The stretch at 304 to 325 forms a coiled coil; sequence KQDILDETEKRDTAVNQKKKLE. The tract at residues 331-399 is disordered; it reads PVEELSSSKN…ESVDFDRPRR (69 aa). The segment covering 362 to 376 has biased composition (basic residues); the sequence is KVKHSMKSRKPKKNK. Positions 431 to 451 form a coiled coil; that stretch reads NIQDLQVKYKKSKKVLEKELK. A compositionally biased stretch (basic and acidic residues) spans 455–467; sequence KAMKSPKKNEKTF. 2 disordered regions span residues 455–519 and 583–603; these read KAMK…HSSF and HNDT…KNKA. Positions 483–512 are enriched in low complexity; it reads RPSSTHSTSSVDAECSHNNSHSENINSSIN. Positions 583 to 593 are enriched in polar residues; it reads HNDTNKSSPKT. Residues 594–603 are compositionally biased toward basic residues; sequence YRSRSRKNKA.

This sequence belongs to the shugoshin family.

It localises to the nucleus. The protein resides in the chromosome. It is found in the centromere. In terms of biological role, plays a central role in chromosome cohesion during cell division by preventing premature dissociation of cohesin complex from centromeres after prophase, when most of cohesin complex dissociates from chromosomes arms. This is Shugoshin (SGO1) from Candida glabrata (strain ATCC 2001 / BCRC 20586 / JCM 3761 / NBRC 0622 / NRRL Y-65 / CBS 138) (Yeast).